A 106-amino-acid chain; its full sequence is Urease subunit beta (106 aa).

It belongs to the urease beta subunit family. Heterotrimer of UreA (gamma), UreB (beta) and UreC (alpha) subunits. Three heterotrimers associate to form the active enzyme.

The protein resides in the cytoplasm. It carries out the reaction urea + 2 H2O + H(+) = hydrogencarbonate + 2 NH4(+). The protein operates within nitrogen metabolism; urea degradation; CO(2) and NH(3) from urea (urease route): step 1/1. This Synechococcus sp. (strain CC9902) protein is Urease subunit beta.